The chain runs to 818 residues: LPS-assembly protein LptD (818 aa).

The signal sequence occupies residues 1–33 (MVNETMKHQFKFNPLATAIFTLLCSGSIQSSYA).

This sequence belongs to the LptD family. As to quaternary structure, component of the lipopolysaccharide transport and assembly complex. Interacts with LptE and LptA.

The protein resides in the cell outer membrane. Together with LptE, is involved in the assembly of lipopolysaccharide (LPS) at the surface of the outer membrane. The polypeptide is LPS-assembly protein LptD (Acinetobacter baumannii (strain ATCC 19606 / DSM 30007 / JCM 6841 / CCUG 19606 / CIP 70.34 / NBRC 109757 / NCIMB 12457 / NCTC 12156 / 81)).